A 394-amino-acid polypeptide reads, in one-letter code: Phosphoglycerate kinase (394 aa).

Substrate is bound by residues 21 to 23 (DFN), R36, 59 to 62 (HLGR), R118, and R151. Residue S183 is modified to Phosphoserine. ATP-binding residues include K201 and G292. Phosphothreonine is present on T299. Residues E323 and 350–353 (GGDS) contribute to the ATP site.

It belongs to the phosphoglycerate kinase family. Monomer.

Its subcellular location is the cytoplasm. The enzyme catalyses (2R)-3-phosphoglycerate + ATP = (2R)-3-phospho-glyceroyl phosphate + ADP. The protein operates within carbohydrate degradation; glycolysis; pyruvate from D-glyceraldehyde 3-phosphate: step 2/5. The sequence is that of Phosphoglycerate kinase from Bacillus cereus (strain B4264).